The sequence spans 533 residues: MVADLRREARDVEEEVERIRRRAEQDAAEQTERVRREAEQIRRHAEEAAEAIRERAVADAELRASRAEAAARDAIHAEREQIRAELDEDLRTQRTELRGWDSRLTQREQRVTDQAASVEERLRRLETREAELAVREAGLDSRESDLGELEEARRRELERVAGLTSAEARTELVKVVEDQARLDAAVRVRDIEARAEEEAEDRARRIVTLAIQRVASDQTAESVVSVLHLPSDEMKGRIIGREGRNIRAFESVTGVNVLIDDTPEAVLLSCFDPVRREMGRITLTALVSDGRIHPHRIEEEYARAEREVAAKCVRAGEDALIDVGIAEMHPELINLLGRLRYRTSYGQNVLAHLVESAHLAGIMAAELRLPPAIAKRGTLLHDLGKALTHEVEGSHAIVGAEIARRYGEHEDVVHAIEAHHNEVEPRSIGAVLTQAADQISGGRPGARRDSLESYVKRLERIEQIAAERPGVEKVFAMQAGREVRVMVVPELVDDVAAHLLARDVAKQIEDELTYPGQIRVTVVRETRAVGMAR.

The segment at 16-41 (VERIRRRAEQDAAEQTERVRREAEQI) is disordered. The segment covering 22-41 (RAEQDAAEQTERVRREAEQI) has biased composition (basic and acidic residues). In terms of domain architecture, KH spans 223 to 289 (VVSVLHLPSD…RITLTALVSD (67 aa)). The HD domain maps to 349–442 (VLAHLVESAH…TQAADQISGG (94 aa)).

Belongs to the RNase Y family.

Its function is as follows. Endoribonuclease that initiates mRNA decay. This chain is Ribonuclease Y, found in Parafrankia sp. (strain EAN1pec).